A 193-amino-acid chain; its full sequence is Molybdenum cofactor guanylyltransferase (193 aa).

Residues 8–10 (LAG), Lys-21, Asp-67, and Asp-98 contribute to the GTP site. Asp-98 lines the Mg(2+) pocket.

It belongs to the MobA family. In terms of assembly, monomer. Mg(2+) serves as cofactor.

The protein resides in the cytoplasm. It catalyses the reaction Mo-molybdopterin + GTP + H(+) = Mo-molybdopterin guanine dinucleotide + diphosphate. Transfers a GMP moiety from GTP to Mo-molybdopterin (Mo-MPT) cofactor (Moco or molybdenum cofactor) to form Mo-molybdopterin guanine dinucleotide (Mo-MGD) cofactor. The protein is Molybdenum cofactor guanylyltransferase of Cereibacter sphaeroides (strain ATCC 17023 / DSM 158 / JCM 6121 / CCUG 31486 / LMG 2827 / NBRC 12203 / NCIMB 8253 / ATH 2.4.1.) (Rhodobacter sphaeroides).